Reading from the N-terminus, the 189-residue chain is GTP cyclohydrolase 1 (189 aa).

Residues cysteine 78, histidine 81, and cysteine 150 each contribute to the Zn(2+) site.

This sequence belongs to the GTP cyclohydrolase I family. In terms of assembly, toroid-shaped homodecamer, composed of two pentamers of five dimers.

The enzyme catalyses GTP + H2O = 7,8-dihydroneopterin 3'-triphosphate + formate + H(+). The protein operates within cofactor biosynthesis; 7,8-dihydroneopterin triphosphate biosynthesis; 7,8-dihydroneopterin triphosphate from GTP: step 1/1. This Bacillus pumilus (strain SAFR-032) protein is GTP cyclohydrolase 1.